A 422-amino-acid polypeptide reads, in one-letter code: UDP-N-acetylglucosamine 1-carboxyvinyltransferase (422 aa).

Lys-22–Asn-23 contributes to the phosphoenolpyruvate binding site. Arg-94 contacts UDP-N-acetyl-alpha-D-glucosamine. Cys-118 functions as the Proton donor in the catalytic mechanism. A 2-(S-cysteinyl)pyruvic acid O-phosphothioketal modification is found at Cys-118. Residues Arg-123–Leu-127, Asp-309, and Leu-331 contribute to the UDP-N-acetyl-alpha-D-glucosamine site.

Belongs to the EPSP synthase family. MurA subfamily.

The protein localises to the cytoplasm. The enzyme catalyses phosphoenolpyruvate + UDP-N-acetyl-alpha-D-glucosamine = UDP-N-acetyl-3-O-(1-carboxyvinyl)-alpha-D-glucosamine + phosphate. It functions in the pathway cell wall biogenesis; peptidoglycan biosynthesis. Functionally, cell wall formation. Adds enolpyruvyl to UDP-N-acetylglucosamine. The chain is UDP-N-acetylglucosamine 1-carboxyvinyltransferase from Sulfurimonas denitrificans (strain ATCC 33889 / DSM 1251) (Thiomicrospira denitrificans (strain ATCC 33889 / DSM 1251)).